A 206-amino-acid polypeptide reads, in one-letter code: MNAVPDGRSDKPRSVVGVLALQGDTREHLAALTEAGAEAVTVRRLRELEAVDALVIPGGESTAMSHLLREFELLEPLRARLAEGMPAYGSCAGMILLATEILDAGAAGREATPLKGIDMSVRRNAFGRQVDSFEGDIPFVGLDSSVHAVFIRAPWVERIGDGVEVLARADGHIVAVRQGRMLATAFHPEVTGDRRVHKLFVDMVSE.

59 to 61 contacts L-glutamine; the sequence is GES. Cys-91 serves as the catalytic Nucleophile. Residues Arg-123 and 151 to 152 each bind L-glutamine; that span reads IR. Residues His-187 and Glu-189 each act as charge relay system in the active site.

This sequence belongs to the glutaminase PdxT/SNO family. As to quaternary structure, in the presence of PdxS, forms a dodecamer of heterodimers. Only shows activity in the heterodimer.

It carries out the reaction aldehydo-D-ribose 5-phosphate + D-glyceraldehyde 3-phosphate + L-glutamine = pyridoxal 5'-phosphate + L-glutamate + phosphate + 3 H2O + H(+). The enzyme catalyses L-glutamine + H2O = L-glutamate + NH4(+). Its pathway is cofactor biosynthesis; pyridoxal 5'-phosphate biosynthesis. Functionally, catalyzes the hydrolysis of glutamine to glutamate and ammonia as part of the biosynthesis of pyridoxal 5'-phosphate. The resulting ammonia molecule is channeled to the active site of PdxS. This is Pyridoxal 5'-phosphate synthase subunit PdxT from Mycobacterium sp. (strain JLS).